Consider the following 350-residue polypeptide: Alcohol dehydrogenase (350 aa).

C46 contributes to the Zn(2+) binding site. Positions 47, 48, and 51 each coordinate NAD(+). H69, C100, C103, C106, C114, and C156 together coordinate Zn(2+). Residues G183, G184, L185, and D204 each contribute to the NAD(+) site. T205 is modified (phosphothreonine). NAD(+) contacts are provided by K209 and F224. Position 250 is a phosphothreonine (T250). 5 residues coordinate NAD(+): V271, M273, S296, V298, and R343.

It belongs to the zinc-containing alcohol dehydrogenase family. As to quaternary structure, homotetramer. Zn(2+) is required as a cofactor.

Its subcellular location is the cytoplasm. It carries out the reaction a primary alcohol + NAD(+) = an aldehyde + NADH + H(+). It catalyses the reaction a secondary alcohol + NAD(+) = a ketone + NADH + H(+). The enzyme catalyses ethanol + NAD(+) = acetaldehyde + NADH + H(+). In terms of biological role, reduces acetaldehyde to ethanol during the fermentation of glucose. This chain is Alcohol dehydrogenase (adh1), found in Schizosaccharomyces pombe (strain 972 / ATCC 24843) (Fission yeast).